We begin with the raw amino-acid sequence, 689 residues long: DNA topoisomerase 1 (689 aa).

The Toprim domain maps to 3-113 (DNLVIVESPA…KENRVVFNEI (111 aa)). 2 residues coordinate Mg(2+): glutamate 9 and aspartate 82. Positions 129-557 (EMNLVDAQQA…FFSSFKQDVE (429 aa)) constitute a Topo IA-type catalytic domain. The interval 163–168 (SAGRVQ) is interaction with DNA. The active-site O-(5'-phospho-DNA)-tyrosine intermediate is the tyrosine 298. Residues 328-357 (SKRKASGKQGDQDAHEAIRPSSTMRTPDDM) form a disordered region. 3 consecutive C4-type zinc fingers follow at residues 577 to 603 (CEVCGSPMVIKMGRYGKFMACSNFPDC), 617 to 645 (CPKCNDGDVVERKSKKNRVFYGCSKYPEC), and 658 to 681 (CPKCNQYLVENKKGKTTQVICSNC).

It belongs to the type IA topoisomerase family. In terms of assembly, monomer. Mg(2+) is required as a cofactor.

The enzyme catalyses ATP-independent breakage of single-stranded DNA, followed by passage and rejoining.. Releases the supercoiling and torsional tension of DNA, which is introduced during the DNA replication and transcription, by transiently cleaving and rejoining one strand of the DNA duplex. Introduces a single-strand break via transesterification at a target site in duplex DNA. The scissile phosphodiester is attacked by the catalytic tyrosine of the enzyme, resulting in the formation of a DNA-(5'-phosphotyrosyl)-enzyme intermediate and the expulsion of a 3'-OH DNA strand. The free DNA strand then undergoes passage around the unbroken strand, thus removing DNA supercoils. Finally, in the religation step, the DNA 3'-OH attacks the covalent intermediate to expel the active-site tyrosine and restore the DNA phosphodiester backbone. The sequence is that of DNA topoisomerase 1 from Staphylococcus aureus (strain bovine RF122 / ET3-1).